We begin with the raw amino-acid sequence, 109 residues long: Phosphoribosyl-ATP pyrophosphatase (109 aa).

It belongs to the PRA-PH family.

It is found in the cytoplasm. It catalyses the reaction 1-(5-phospho-beta-D-ribosyl)-ATP + H2O = 1-(5-phospho-beta-D-ribosyl)-5'-AMP + diphosphate + H(+). It participates in amino-acid biosynthesis; L-histidine biosynthesis; L-histidine from 5-phospho-alpha-D-ribose 1-diphosphate: step 2/9. This is Phosphoribosyl-ATP pyrophosphatase from Azorhizobium caulinodans (strain ATCC 43989 / DSM 5975 / JCM 20966 / LMG 6465 / NBRC 14845 / NCIMB 13405 / ORS 571).